The primary structure comprises 274 residues: Glutamate racemase (274 aa).

Substrate is bound by residues 9-10 (DS) and 41-42 (YG). Cys-73 serves as the catalytic Proton donor/acceptor. 74–75 (NT) serves as a coordination point for substrate. Catalysis depends on Cys-183, which acts as the Proton donor/acceptor. 184 to 185 (TH) contacts substrate.

Belongs to the aspartate/glutamate racemases family.

It catalyses the reaction L-glutamate = D-glutamate. The protein operates within cell wall biogenesis; peptidoglycan biosynthesis. Provides the (R)-glutamate required for cell wall biosynthesis. This Shewanella baltica (strain OS155 / ATCC BAA-1091) protein is Glutamate racemase.